Consider the following 207-residue polypeptide: MKIIHKGLVEYLPTFEAMKTFNAGRNADTEDELWVVEHPPVFTQGLAGKPEHLLIRDDIPVVQIDRGGQITYHGPGQLVVYTMIDFKRRKTSVRNIVSALENSIIATLAEYGIEAAADPKRPGVYVGERKIASLGLRIKNGSVYHGLALNVNMDLSPFTHINPCGYAGMEMTQIADFVQPCPTPDEVAAKLTAHLETQFTPKADNNE.

Residues 27 to 203 (ADTEDELWVV…HLETQFTPKA (177 aa)) form the BPL/LPL catalytic domain. Substrate contacts are provided by residues 66–73 (RGGQITYH), 133–135 (SLG), and 146–148 (GLA). Cys164 functions as the Acyl-thioester intermediate in the catalytic mechanism.

Belongs to the LipB family.

It localises to the cytoplasm. The enzyme catalyses octanoyl-[ACP] + L-lysyl-[protein] = N(6)-octanoyl-L-lysyl-[protein] + holo-[ACP] + H(+). Its pathway is protein modification; protein lipoylation via endogenous pathway; protein N(6)-(lipoyl)lysine from octanoyl-[acyl-carrier-protein]: step 1/2. Functionally, catalyzes the transfer of endogenously produced octanoic acid from octanoyl-acyl-carrier-protein onto the lipoyl domains of lipoate-dependent enzymes. Lipoyl-ACP can also act as a substrate although octanoyl-ACP is likely to be the physiological substrate. This Neisseria meningitidis serogroup B (strain ATCC BAA-335 / MC58) protein is Octanoyltransferase.